Reading from the N-terminus, the 370-residue chain is Pantothenate kinase 3 (370 aa).

The Proton acceptor role is filled by Glu138. Acetyl-CoA contacts are provided by Ser192, Ser195, and Arg207.

It belongs to the type II pantothenate kinase family. In terms of assembly, homodimer.

The protein localises to the cytoplasm. The enzyme catalyses (R)-pantothenate + ATP = (R)-4'-phosphopantothenate + ADP + H(+). Its pathway is cofactor biosynthesis; coenzyme A biosynthesis; CoA from (R)-pantothenate: step 1/5. Subject to allosteric regulation, exists in two distinct conformational states, a catalytically incompetent (or open) conformation stabilized by the binding of acetyl(acyl)-CoA, and a catalytically competent (or closed) conformation stabilized by ATP-binding. Inhibited by acetyl-CoA and its thioesters which act as allosteric inhibitors and compete with the ATP-binding site. Its function is as follows. Catalyzes the phosphorylation of pantothenate to generate 4'-phosphopantothenate in the first and rate-determining step of coenzyme A (CoA) synthesis. In Bos taurus (Bovine), this protein is Pantothenate kinase 3 (PANK3).